Reading from the N-terminus, the 623-residue chain is uncharacterized protein (623 aa).

Residues 1 to 18 (MSSRSGSADTFTQRSDSN) are compositionally biased toward polar residues. 7 disordered regions span residues 1 to 107 (MSSR…DPFT), 132 to 181 (LGSD…EIGA), 207 to 231 (SWNLNSRHKRRDSNDRTVQSRADTD), 298 to 349 (REET…ESDQ), 384 to 464 (RKSV…DRNV), 533 to 553 (SINDLQQGTSSSQNQAMPPET), and 568 to 623 (VESR…TKGD). The segment covering 25–34 (ISLDDVRDNN) has biased composition (basic and acidic residues). The span at 39-49 (SSSGISTTGSS) shows a compositional bias: low complexity. Residues 132 to 144 (LGSDTARPTSNGG) are compositionally biased toward polar residues. A compositionally biased stretch (low complexity) spans 165 to 177 (STSTWGPSGPTTP). Polar residues predominate over residues 328-339 (EKSTFSRISEQP). Residues 400 to 417 (QTPTISTASSPIQPSSSP) are compositionally biased toward low complexity. Residues 533-548 (SINDLQQGTSSSQNQA) show a composition bias toward polar residues. Residues 604–614 (PSASPSTSRTR) show a composition bias toward low complexity.

This is an uncharacterized protein from Emericella nidulans (strain FGSC A4 / ATCC 38163 / CBS 112.46 / NRRL 194 / M139) (Aspergillus nidulans).